We begin with the raw amino-acid sequence, 236 residues long: uncharacterized protein (236 aa).

Disordered regions lie at residues methionine 1–serine 48, valine 67–arginine 122, and lysine 134–threonine 192. Basic residues predominate over residues arginine 85–cysteine 99. Positions proline 180–proline 189 are enriched in pro residues.

This is an uncharacterized protein from Encephalitozoon cuniculi (strain GB-M1) (Microsporidian parasite).